Consider the following 243-residue polypeptide: Terpene cyclase dpasB (243 aa).

Transmembrane regions (helical) follow at residues 16 to 36 (VVWV…SNYI), 50 to 70 (MALM…FIYP), 79 to 99 (IHTL…RYGA), 112 to 132 (LPVI…AFAE), 141 to 161 (AVSG…QLLC), 172 to 189 (LWLA…PNML), and 207 to 227 (IWFL…LWYV).

The protein belongs to the paxB family.

It is found in the membrane. Its pathway is secondary metabolite biosynthesis; terpenoid biosynthesis. In terms of biological role, terpene cyclase; part of the gene cluster that mediates the biosynthesis of the diterpenoid pyrones subglutinols A and B. The first step of the pathway is the synthesis of the alpha-pyrone moiety by the polyketide synthase dpasA via condensation of one acetyl-CoA starter unit with 3 malonyl-CoA units and 2 methylations. The alpha-pyrone is then combined with geranylgeranyl pyrophosphate (GGPP) formed by the GGPP synthase dpasD through the action of the prenyltransferase dpasC to yield a linear alpha-pyrone diterpenoid. Subsequent steps in the diterpenoid pyrone biosynthetic pathway involve the decalin core formation, which is initiated by the epoxidation of the C10-C11 olefin by the FAD-dependent oxidoreductase dpasE, and is followed by a cyclization cascade catalyzed by the terpene cyclase dpasB. The FAD-linked oxidoreductase dpasF is then involved in tetrahydrofuran (THF) ring formation at the C5 unit to complete the formation of subglutinols A and B. DpasF possesses also an additional catalytic ability of multi-step oxidations to generate a new DDP analog with an enone system at the C5 named FDDP A. The chain is Terpene cyclase dpasB from Apiospora sacchari (Arthrinium sacchari).